A 514-amino-acid polypeptide reads, in one-letter code: 2,3-bisphosphoglycerate-independent phosphoglycerate mutase (514 aa).

Mn(2+) is bound by residues D12 and S62. Residue S62 is the Phosphoserine intermediate of the active site. Residues H123, 153–154 (RD), R185, R191, 260–263 (RPDR), and K335 contribute to the substrate site. Residues D402, H406, D443, H444, and H462 each contribute to the Mn(2+) site.

This sequence belongs to the BPG-independent phosphoglycerate mutase family. Monomer. Requires Mn(2+) as cofactor.

The enzyme catalyses (2R)-2-phosphoglycerate = (2R)-3-phosphoglycerate. It participates in carbohydrate degradation; glycolysis; pyruvate from D-glyceraldehyde 3-phosphate: step 3/5. In terms of biological role, catalyzes the interconversion of 2-phosphoglycerate and 3-phosphoglycerate. This Lachnoclostridium phytofermentans (strain ATCC 700394 / DSM 18823 / ISDg) (Clostridium phytofermentans) protein is 2,3-bisphosphoglycerate-independent phosphoglycerate mutase.